A 327-amino-acid chain; its full sequence is Short chain isoprenyl diphosphate synthase (327 aa).

Lys-48, Arg-51, and His-80 together coordinate isopentenyl diphosphate. Positions 87 and 91 each coordinate Mg(2+). Residue Arg-96 coordinates an all-trans-polyprenyl diphosphate. Arg-97 is a binding site for isopentenyl diphosphate. An all-trans-polyprenyl diphosphate is bound by residues Lys-176, Thr-177, Gln-214, Lys-231, and Lys-241.

The protein belongs to the FPP/GGPP synthase family. Homodimer. It depends on Mg(2+) as a cofactor.

Its subcellular location is the cytoplasm. This chain is Short chain isoprenyl diphosphate synthase (idsA), found in Methanocaldococcus jannaschii (strain ATCC 43067 / DSM 2661 / JAL-1 / JCM 10045 / NBRC 100440) (Methanococcus jannaschii).